The sequence spans 9904 residues: Extracellular matrix-binding protein ebh (9904 aa).

An N-terminal signal peptide occupies residues 1–39; the sequence is MNYRDKIQKFSIRKYTVGTFSTVIATLVFLGFNTSQAHA. The span at 41–59 shows a compositional bias: polar residues; the sequence is ETNQPASVVKQKQQSNNEQ. Disordered stretches follow at residues 41–153 and 250–277; these read ETNQ…NDNR and PQRQ…PRSV. Residues 65-78 are compositionally biased toward low complexity; that stretch reads SQVQNSQNSQNSQS. A compositionally biased stretch (polar residues) spans 79-117; sequence LSATHENEQPNISQANLVDQKVAQSSTTNDEQPASQNVN. The span at 130–140 shows a compositional bias: basic and acidic residues; it reads PDKEEGKHKQN. Polar residues-rich tracts occupy residues 141 to 151 and 250 to 266; these read ESQSANKNGND and PQRQ…QTRS. FIVAR domains follow at residues 2524-2580, 2610-2666, 2687-2750, 2780-2836, 2864-2919, 2947-3002, 3030-3085, 3154-3212, 3280-3339, 3407-3465, 3533-3591, 3659-3717, 3785-3843, 3911-3969, 4037-4095, 4160-4208, 4276-4334, 4402-4460, 4528-4586, 4654-4712, 4780-4838, 4906-4964, 5032-5090, 5158-5216, 5284-5342, 5410-5468, 5536-5593, 5661-5719, 5787-5845, 5913-5971, 6039-6097, 6175-6223, 6291-6349, 6417-6475, 6543-6601, 6669-6727, 6795-6853, 6921-6979, 7047-7105, 7173-7231, 7299-7357, 7425-7486, 7551-7609, 7677-7735, 7803-7860, 7928-7986, 8054-8112, 8180-8238, 8306-8364, 8432-8490, 8558-8612, 8680-8739, and 8934-8990; these read AKNH…VSDA, SKNN…ISEE, DTHT…VQTA, AKTK…IAEE, AKTQ…IRQN, AKNQ…INTN, AKTQ…INDK, AMTK…VNQK, AMTG…VNNA, AMGN…VNRA, AMGN…VTEA, AMNT…ITQK, AMAS…VEAA, AMGN…VEQA, AMGT…VTAA, DKDA…VDNA, AMGA…INGM, AMTA…VNSA, AMKG…ITQA, AMHS…VEQA, AMGQ…VERA, AMTA…VTNA, AMKG…INQA, AMTN…VESA, AMSN…VEQA, AMNQ…INQK, AMGN…VQAA, AMGQ…VEAA, AMQR…VEQA, AMDQ…VTAA, AMNQ…VTQA, DKDQ…VEAA, AMGN…VEAA, AMDK…INQA, AMTQ…ITAA, AMTQ…IQQA, AMTN…VEQA, AMTQ…VAQA, AMGT…VTQA, AMGN…ITRA, AMDQ…ITNE, AMEL…VNGA, AMHG…INQA, LMDA…VSSA, AIKA…IDQA, AMEA…VEQL, AMQA…VEQL, AMET…VEQA, SMDQ…VDQA, AMDQ…VIKL, and AMET…INGA. Residues 9710–9730 form a helical membrane-spanning segment; that stretch reads IKNAIGVVGISGLLASFWFFI. Residues 9807 to 9904 form a disordered region; that stretch reads RRKEDEEDVE…KKKKSKKNKK (98 aa). 2 stretches are compositionally biased toward basic and acidic residues: residues 9822–9832 and 9871–9881; these read TDEKVLKDNEH and QKDNQSKDKKS. The span at 9886–9904 shows a compositional bias: basic residues; that stretch reads TSKKVAAKKKKKKSKKNKK.

The protein localises to the cell membrane. The chain is Extracellular matrix-binding protein ebh (ebh) from Staphylococcus aureus (strain MW2).